The chain runs to 767 residues: Polyribonucleotide nucleotidyltransferase (767 aa).

Aspartate 509 and aspartate 515 together coordinate Mg(2+). The KH domain occupies 575-634 (PRILTVKVPIDKIGEVIGPKGKMINSIQDETGAEITIEDDGTIYIGATDGPSAEAARDAI). An S1 motif domain is found at 646–718 (GERYLGTVVK…ERGKLSLVPV (73 aa)). The interval 725 to 767 (AVAAPNGGESPNGAKKTDASGNGAKQPRRRRRTRSSSRSSENT) is disordered. Basic residues predominate over residues 750–759 (QPRRRRRTRS).

The protein belongs to the polyribonucleotide nucleotidyltransferase family. It depends on Mg(2+) as a cofactor.

It is found in the cytoplasm. The enzyme catalyses RNA(n+1) + phosphate = RNA(n) + a ribonucleoside 5'-diphosphate. In terms of biological role, involved in mRNA degradation. Catalyzes the phosphorolysis of single-stranded polyribonucleotides processively in the 3'- to 5'-direction. This Thermobifida fusca (strain YX) protein is Polyribonucleotide nucleotidyltransferase.